A 538-amino-acid chain; its full sequence is Putative cysteine ligase BshC (538 aa).

The stretch at 460–484 (KINEQIELLERMLKRNVEKKHEVEL) forms a coiled coil.

Belongs to the BshC family.

Involved in bacillithiol (BSH) biosynthesis. May catalyze the last step of the pathway, the addition of cysteine to glucosamine malate (GlcN-Mal) to generate BSH. The protein is Putative cysteine ligase BshC of Bacillus anthracis (strain A0248).